Reading from the N-terminus, the 134-residue chain is 6,7-dimethyl-8-ribityllumazine synthase (134 aa).

Residues Phe-12, 44 to 46, and 68 to 70 each bind 5-amino-6-(D-ribitylamino)uracil; these read VFD and SVI. 73 to 74 contributes to the (2S)-2-hydroxy-3-oxobutyl phosphate binding site; that stretch reads ET. His-76 serves as the catalytic Proton donor. A 5-amino-6-(D-ribitylamino)uracil-binding site is contributed by Leu-101. Arg-116 is a (2S)-2-hydroxy-3-oxobutyl phosphate binding site.

Belongs to the DMRL synthase family.

It carries out the reaction (2S)-2-hydroxy-3-oxobutyl phosphate + 5-amino-6-(D-ribitylamino)uracil = 6,7-dimethyl-8-(1-D-ribityl)lumazine + phosphate + 2 H2O + H(+). It functions in the pathway cofactor biosynthesis; riboflavin biosynthesis; riboflavin from 2-hydroxy-3-oxobutyl phosphate and 5-amino-6-(D-ribitylamino)uracil: step 1/2. In terms of biological role, catalyzes the formation of 6,7-dimethyl-8-ribityllumazine by condensation of 5-amino-6-(D-ribitylamino)uracil with 3,4-dihydroxy-2-butanone 4-phosphate. This is the penultimate step in the biosynthesis of riboflavin. The sequence is that of 6,7-dimethyl-8-ribityllumazine synthase from Methanosarcina acetivorans (strain ATCC 35395 / DSM 2834 / JCM 12185 / C2A).